We begin with the raw amino-acid sequence, 215 residues long: Cytidylate kinase (215 aa).

Residue 10–18 participates in ATP binding; it reads GPAASGKGT.

This sequence belongs to the cytidylate kinase family. Type 1 subfamily.

The protein localises to the cytoplasm. The catalysed reaction is CMP + ATP = CDP + ADP. It carries out the reaction dCMP + ATP = dCDP + ADP. The protein is Cytidylate kinase of Bartonella henselae (strain ATCC 49882 / DSM 28221 / CCUG 30454 / Houston 1) (Rochalimaea henselae).